The following is a 385-amino-acid chain: tRNA-specific 2-thiouridylase MnmA (385 aa).

ATP contacts are provided by residues 8–15 and Leu-34; that span reads AMSGGVDS. Residue Cys-102 is the Nucleophile of the active site. An intrachain disulfide couples Cys-102 to Cys-200. Position 126 (Gly-126) interacts with ATP. Positions 150-152 are interaction with tRNA; sequence KDQ. Catalysis depends on Cys-200, which acts as the Cysteine persulfide intermediate. The tract at residues 307–308 is interaction with tRNA; sequence RY.

This sequence belongs to the MnmA/TRMU family.

Its subcellular location is the cytoplasm. It catalyses the reaction S-sulfanyl-L-cysteinyl-[protein] + uridine(34) in tRNA + AH2 + ATP = 2-thiouridine(34) in tRNA + L-cysteinyl-[protein] + A + AMP + diphosphate + H(+). In terms of biological role, catalyzes the 2-thiolation of uridine at the wobble position (U34) of tRNA, leading to the formation of s(2)U34. In Heliobacterium modesticaldum (strain ATCC 51547 / Ice1), this protein is tRNA-specific 2-thiouridylase MnmA.